We begin with the raw amino-acid sequence, 255 residues long: Thiazole synthase (255 aa).

The active-site Schiff-base intermediate with DXP is Lys-95. Residues Gly-156, 182–183, and 204–205 contribute to the 1-deoxy-D-xylulose 5-phosphate site; these read AG and NT.

The protein belongs to the ThiG family. As to quaternary structure, homotetramer. Forms heterodimers with either ThiH or ThiS.

The protein resides in the cytoplasm. It catalyses the reaction [ThiS sulfur-carrier protein]-C-terminal-Gly-aminoethanethioate + 2-iminoacetate + 1-deoxy-D-xylulose 5-phosphate = [ThiS sulfur-carrier protein]-C-terminal Gly-Gly + 2-[(2R,5Z)-2-carboxy-4-methylthiazol-5(2H)-ylidene]ethyl phosphate + 2 H2O + H(+). The protein operates within cofactor biosynthesis; thiamine diphosphate biosynthesis. Catalyzes the rearrangement of 1-deoxy-D-xylulose 5-phosphate (DXP) to produce the thiazole phosphate moiety of thiamine. Sulfur is provided by the thiocarboxylate moiety of the carrier protein ThiS. In vitro, sulfur can be provided by H(2)S. This is Thiazole synthase from Photorhabdus laumondii subsp. laumondii (strain DSM 15139 / CIP 105565 / TT01) (Photorhabdus luminescens subsp. laumondii).